Consider the following 203-residue polypeptide: MTNDLIAKAAIDRRLAEIITPVIEDLGYELVRIRLMSGKTTTLQIMADRPDGGIEVDDCAAISNAVSATLDVEDPILDAYTLEVSSPGIDRPLTRLKDFDMFEGYEAKLETADLIDGRRRFKGELAGIEDDEVLINIEEHGETVTIGLKFDWLSDAKLVLTDDLIKEMLRQRKAAGVLNEDAFDDIETEGSAEGTTGSEEENK.

Residues 183–203 (FDDIETEGSAEGTTGSEEENK) form a disordered region.

Belongs to the RimP family.

Its subcellular location is the cytoplasm. In terms of biological role, required for maturation of 30S ribosomal subunits. This is Ribosome maturation factor RimP from Ruegeria sp. (strain TM1040) (Silicibacter sp.).